An 84-amino-acid chain; its full sequence is Beta-defensin 119 (84 aa).

The signal sequence occupies residues 1-21 (MKFLFLFLAILLATKIPVISG). 3 cysteine pairs are disulfide-bonded: C28-C55, C35-C49, and C39-C56.

This sequence belongs to the beta-defensin family.

Its subcellular location is the secreted. In terms of biological role, has antibacterial activity. The protein is Beta-defensin 119 (DEFB119) of Macaca fascicularis (Crab-eating macaque).